Here is a 256-residue protein sequence, read N- to C-terminus: Pimeloyl-[acyl-carrier protein] methyl ester esterase (256 aa).

Residues 15–242 (HLVLLHGWGL…AAHAPFISHP (228 aa)) enclose the AB hydrolase-1 domain. Substrate is bound by residues Trp22, 82–83 (SL), and 143–147 (FLALQ). The Nucleophile role is filled by Ser82. Active-site residues include Asp207 and His235. His235 lines the substrate pocket.

It belongs to the AB hydrolase superfamily. Carboxylesterase BioH family. In terms of assembly, monomer.

Its subcellular location is the cytoplasm. The enzyme catalyses 6-carboxyhexanoyl-[ACP] methyl ester + H2O = 6-carboxyhexanoyl-[ACP] + methanol + H(+). Its pathway is cofactor biosynthesis; biotin biosynthesis. The physiological role of BioH is to remove the methyl group introduced by BioC when the pimeloyl moiety is complete. It allows to synthesize pimeloyl-ACP via the fatty acid synthetic pathway through the hydrolysis of the ester bonds of pimeloyl-ACP esters. This chain is Pimeloyl-[acyl-carrier protein] methyl ester esterase, found in Salmonella dublin (strain CT_02021853).